Consider the following 308-residue polypeptide: Uridylate cyclase (308 aa).

Residues Asp62 and Asp106 each contribute to the Mn(2+) site.

The protein belongs to the adenylyl cyclase class-4/guanylyl cyclase family. Pyrimidine cyclase subfamily. In terms of assembly, homodimer. Requires Mn(2+) as cofactor.

It is found in the cytoplasm. It catalyses the reaction GTP = 3',5'-cyclic GMP + diphosphate. The catalysed reaction is UTP = 3',5'-cyclic UMP + diphosphate. Functionally, pycsar (pyrimidine cyclase system for antiphage resistance) provides immunity against bacteriophage. The pyrimidine cyclase (PycC) synthesizes cyclic nucleotides in response to infection; these serve as specific second messenger signals. The signals activate the adjacent effector, leading to bacterial cell death and abortive phage infection. A clade D Pycsar system. Its function is as follows. The pyrimidine cyclase gene of a two-gene Pycsar system, generates cyclic UMP (cUMP) from UTP as well as cGMP from GTP to a lesser extent, has little to no activity on ATP or CTP. Expression of this and adjacent effector PtPycTM (AC A0A4Q9KQH5) probably confers resistance to bacteriophage. The genes are probably only expressed in response to bacteriophage infection. This Propioniciclava tarda protein is Uridylate cyclase.